Here is a 99-residue protein sequence, read N- to C-terminus: uncharacterized protein (99 aa).

Its subcellular location is the mitochondrion. This is an uncharacterized protein from Marchantia polymorpha (Common liverwort).